Reading from the N-terminus, the 628-residue chain is Kinesin-like protein KIN-10B (628 aa).

A Kinesin motor domain is found at 20–340; that stretch reads NVRVVLRVRP…VSLAARSRHI (321 aa). 114–121 serves as a coordination point for ATP; it reads GATGSGKT. Positions 496–519 are disordered; it reads SPIDSNAKPNSAHGSSPFLKPMTP. Residues 498–509 show a composition bias toward polar residues; it reads IDSNAKPNSAHG.

This sequence belongs to the TRAFAC class myosin-kinesin ATPase superfamily. Kinesin family. KIN-10 subfamily.

This is Kinesin-like protein KIN-10B from Arabidopsis thaliana (Mouse-ear cress).